We begin with the raw amino-acid sequence, 465 residues long: Serine carboxypeptidase-like 19 (465 aa).

An N-terminal signal peptide occupies residues 1–23 (MRNLSFIVLFLLTLFFIHHLVDA). 77 to 79 (TGG) contacts substrate. Disulfide bonds link Cys82-Cys353, Cys246-Cys260, and Cys284-Cys320. Asn103 carries N-linked (GlcNAc...) asparagine glycosylation. Residue 177 to 179 (DSY) participates in substrate binding. Ser178 is an active-site residue. Positions 292-317 (DTPNIRTDRRRVMKEFSVNDSSSLPP) are cleaved as a propeptide — linker peptide. Residues Asn310 and Asn373 are each glycosylated (N-linked (GlcNAc...) asparagine). The active site involves Asp389. Asn405 is a glycosylation site (N-linked (GlcNAc...) asparagine). Position 439–443 (439–443 (KGGGH)) interacts with substrate. The active site involves His443.

The protein belongs to the peptidase S10 family. In terms of assembly, heterodimer. In terms of processing, N-glycosylated. In terms of tissue distribution, expressed in roots and flowers, and at lower levels in young leaves and seedlings. Expressed in mature seeds and detected in expanding siliques.

It localises to the secreted. It carries out the reaction 1-O-(trans-sinapoyl)-beta-D-glucose + choline = O-sinapoylcholine + D-glucose. Slightly inhibited by phenylmethylsulfonyl fluoride (PMSF). Involved in plants secondary metabolism. Functions as acyltransferase to form the sinapate ester sinapoylcholine also known as sinapine. Able to convert in vitro benzoylglucose into benzoylcholine. This Arabidopsis thaliana (Mouse-ear cress) protein is Serine carboxypeptidase-like 19.